An 89-amino-acid chain; its full sequence is Small ribosomal subunit protein uS15 (89 aa).

It belongs to the universal ribosomal protein uS15 family. As to quaternary structure, part of the 30S ribosomal subunit. Forms a bridge to the 50S subunit in the 70S ribosome, contacting the 23S rRNA.

Functionally, one of the primary rRNA binding proteins, it binds directly to 16S rRNA where it helps nucleate assembly of the platform of the 30S subunit by binding and bridging several RNA helices of the 16S rRNA. Forms an intersubunit bridge (bridge B4) with the 23S rRNA of the 50S subunit in the ribosome. This chain is Small ribosomal subunit protein uS15, found in Synechocystis sp. (strain ATCC 27184 / PCC 6803 / Kazusa).